The sequence spans 561 residues: Liver carboxylesterase 1F (561 aa).

The N-terminal stretch at 1-18 is a signal peptide; the sequence is MCLSFLFLVSLATCVVYG. An N-linked (GlcNAc...) asparagine glycan is attached at Asn-79. A disulfide bridge links Cys-87 with Cys-116. Catalysis depends on Ser-221, which acts as the Acyl-ester intermediate. Cys-273 and Cys-284 are oxidised to a cystine. Active-site charge relay system residues include Glu-353 and His-466. A Prevents secretion from ER motif is present at residues 558-561; the sequence is HNEL.

This sequence belongs to the type-B carboxylesterase/lipase family. As to expression, expressed in liver and kidney.

The protein resides in the lipid droplet. It localises to the cytoplasm. Its subcellular location is the cytosol. It is found in the endoplasmic reticulum. The protein localises to the microsome. It catalyses the reaction a carboxylic ester + H2O = an alcohol + a carboxylate + H(+). It carries out the reaction all-trans-retinyl hexadecanoate + H2O = all-trans-retinol + hexadecanoate + H(+). Involved in the detoxification of xenobiotics and in the activation of ester and amide prodrugs. Hydrolyzes retinyl esters. Hydrolyzes p-nitrophenyl butyrate (PNPB), triacylglycerol and monoacylglycerol. Shows higher activity against PNPB, a short-chain fatty acid ester, than against triolein, a long-chain fatty acid ester. Shows no detectable activity against diacylglycerol, cholesterol ester or phospholipids. May play a role in adipocyte lipolysis. The chain is Liver carboxylesterase 1F from Rattus norvegicus (Rat).